Here is a 387-residue protein sequence, read N- to C-terminus: WD repeat-containing protein 89 (387 aa).

6 WD repeats span residues 21-65 (KEPT…VLRE), 68-107 (GYPG…EKPV), 112-156 (GYPS…QNLS), 168-208 (THSD…EEDA), 214-254 (NSIS…TDEP), and 319-358 (GHAA…KTFT).

This chain is WD repeat-containing protein 89 (WDR89), found in Homo sapiens (Human).